We begin with the raw amino-acid sequence, 148 residues long: SsrA-binding protein (148 aa).

Residues 123 to 148 (KLHDKRETEKKRDWEREKARIMRSAT) form a disordered region. A compositionally biased stretch (basic and acidic residues) spans 126 to 142 (DKRETEKKRDWEREKAR).

It belongs to the SmpB family.

Its subcellular location is the cytoplasm. In terms of biological role, required for rescue of stalled ribosomes mediated by trans-translation. Binds to transfer-messenger RNA (tmRNA), required for stable association of tmRNA with ribosomes. tmRNA and SmpB together mimic tRNA shape, replacing the anticodon stem-loop with SmpB. tmRNA is encoded by the ssrA gene; the 2 termini fold to resemble tRNA(Ala) and it encodes a 'tag peptide', a short internal open reading frame. During trans-translation Ala-aminoacylated tmRNA acts like a tRNA, entering the A-site of stalled ribosomes, displacing the stalled mRNA. The ribosome then switches to translate the ORF on the tmRNA; the nascent peptide is terminated with the 'tag peptide' encoded by the tmRNA and targeted for degradation. The ribosome is freed to recommence translation, which seems to be the essential function of trans-translation. This chain is SsrA-binding protein, found in Burkholderia thailandensis (strain ATCC 700388 / DSM 13276 / CCUG 48851 / CIP 106301 / E264).